The following is a 425-amino-acid chain: Histidine--tRNA ligase (425 aa).

Belongs to the class-II aminoacyl-tRNA synthetase family. In terms of assembly, homodimer.

The protein localises to the cytoplasm. It catalyses the reaction tRNA(His) + L-histidine + ATP = L-histidyl-tRNA(His) + AMP + diphosphate + H(+). The sequence is that of Histidine--tRNA ligase from Listeria innocua serovar 6a (strain ATCC BAA-680 / CLIP 11262).